Consider the following 287-residue polypeptide: MEQEAYRLISEANRRLKDVGFLFSWKFLRNVNNVKEVGNLLIRSAILFKAVKNWELAGYSFLKAAVLQSQESDFVLDTAINFVNASNMYRKIDPKKSIECLLQAIEVYKSINNFTTAAKHQMTVAEIYESCIMDLEKACMHYEYATEYYREEGSIKSANDCMIKVADCFTRMKQFDKAASVYEQIGIICMRLPILKHRIKDQFLKAILCHFCIGDKDMRLIVGYYTELYAQFIDYREYTLIMKVVESCDTCNLDILVDALREYGSVTRLDYILTIMLLEIKKNIQTQ.

This sequence belongs to the SNAP family.

In Fowlpox virus (strain NVSL) (FPV), this protein is Soluble NSF attachment protein homolog FPV033 (SNAP).